A 145-amino-acid polypeptide reads, in one-letter code: Cystin-1 (145 aa).

Residues 1–129 (MGSGSSRSGR…PEGQSAISYD (129 aa)) form a disordered region. A lipid anchor (N-myristoyl glycine) is attached at G2. The Ciliary targeting motif signature appears at 29–33 (ASEGG). S116 bears the Phosphoserine mark.

As to quaternary structure, interacts (when myristoylated) with UNC119 and UNC119B; interaction is required for localization to cilium. Expressed primarily in the kidney and liver. Expressed at lower levels in the lung, brain and heart.

Its subcellular location is the cell projection. It localises to the cilium membrane. The protein resides in the cytoplasm. The protein localises to the cytoskeleton. It is found in the cilium axoneme. This is Cystin-1 (Cys1) from Mus musculus (Mouse).